The sequence spans 166 residues: Interferon gamma (166 aa).

An N-terminal signal peptide occupies residues 1–23 (MKYTSSFLALLLCVLLGFSGSYG). Position 24 is a pyrrolidone carboxylic acid (Gln24). N-linked (GlcNAc...) asparagine glycans are attached at residues Asn39 and Asn106.

The protein belongs to the type II (or gamma) interferon family. Homodimer. Interacts with IFNGR1 (via extracellular domain); this interaction promotes IFNGR1 dimerization. Released primarily from activated T lymphocytes.

It localises to the secreted. Type II interferon produced by immune cells such as T-cells and NK cells that plays crucial roles in antimicrobial, antiviral, and antitumor responses by activating effector immune cells and enhancing antigen presentation. Primarily signals through the JAK-STAT pathway after interaction with its receptor IFNGR1 to affect gene regulation. Upon IFNG binding, IFNGR1 intracellular domain opens out to allow association of downstream signaling components JAK2, JAK1 and STAT1, leading to STAT1 activation, nuclear translocation and transcription of IFNG-regulated genes. Many of the induced genes are transcription factors such as IRF1 that are able to further drive regulation of a next wave of transcription. Plays a role in class I antigen presentation pathway by inducing a replacement of catalytic proteasome subunits with immunoproteasome subunits. In turn, increases the quantity, quality, and repertoire of peptides for class I MHC loading. Increases the efficiency of peptide generation also by inducing the expression of activator PA28 that associates with the proteasome and alters its proteolytic cleavage preference. Up-regulates as well MHC II complexes on the cell surface by promoting expression of several key molecules such as cathepsins B/CTSB, H/CTSH, and L/CTSL. Participates in the regulation of hematopoietic stem cells during development and under homeostatic conditions by affecting their development, quiescence, and differentiation. This Ovis aries (Sheep) protein is Interferon gamma (IFNG).